The following is a 41-amino-acid chain: uncharacterized protein (41 aa).

Residues 1 to 41 (MGKKHRNRITGQKKNNHIPEKDIIAAEEAHGKEYSAAKRKP) are disordered. A compositionally biased stretch (basic and acidic residues) spans 17–41 (HIPEKDIIAAEEAHGKEYSAAKRKP).

This is an uncharacterized protein from Bacillus subtilis (strain 168).